The following is an 872-amino-acid chain: Alanine--tRNA ligase (872 aa).

Positions 567, 571, 669, and 673 each coordinate Zn(2+).

The protein belongs to the class-II aminoacyl-tRNA synthetase family. The cofactor is Zn(2+).

The protein resides in the cytoplasm. The enzyme catalyses tRNA(Ala) + L-alanine + ATP = L-alanyl-tRNA(Ala) + AMP + diphosphate. Functionally, catalyzes the attachment of alanine to tRNA(Ala) in a two-step reaction: alanine is first activated by ATP to form Ala-AMP and then transferred to the acceptor end of tRNA(Ala). Also edits incorrectly charged Ser-tRNA(Ala) and Gly-tRNA(Ala) via its editing domain. In Streptococcus pyogenes serotype M2 (strain MGAS10270), this protein is Alanine--tRNA ligase.